Consider the following 263-residue polypeptide: N-acyl homoserine lactonase AttM (263 aa).

7 residues coordinate Zn(2+): His103, His105, Asp107, His108, His180, Asp202, and His247.

Belongs to the metallo-beta-lactamase superfamily. Requires Zn(2+) as cofactor.

It catalyses the reaction an N-acyl-L-homoserine lactone + H2O = an N-acyl-L-homoserine + H(+). This Agrobacterium fabrum (strain C58 / ATCC 33970) (Agrobacterium tumefaciens (strain C58)) protein is N-acyl homoserine lactonase AttM.